The primary structure comprises 417 residues: UDP-N-acetylglucosamine 1-carboxyvinyltransferase (417 aa).

Position 22–23 (22–23 (KN)) interacts with phosphoenolpyruvate. UDP-N-acetyl-alpha-D-glucosamine is bound at residue Arg93. Cys117 functions as the Proton donor in the catalytic mechanism. Residue Cys117 is modified to 2-(S-cysteinyl)pyruvic acid O-phosphothioketal. Residues 122-126 (RPVDQ), Asp304, and Ile326 each bind UDP-N-acetyl-alpha-D-glucosamine.

This sequence belongs to the EPSP synthase family. MurA subfamily.

Its subcellular location is the cytoplasm. It catalyses the reaction phosphoenolpyruvate + UDP-N-acetyl-alpha-D-glucosamine = UDP-N-acetyl-3-O-(1-carboxyvinyl)-alpha-D-glucosamine + phosphate. It functions in the pathway cell wall biogenesis; peptidoglycan biosynthesis. Functionally, cell wall formation. Adds enolpyruvyl to UDP-N-acetylglucosamine. This chain is UDP-N-acetylglucosamine 1-carboxyvinyltransferase, found in Neisseria meningitidis serogroup C (strain 053442).